The primary structure comprises 638 residues: Cytoplasmic dynein 1 intermediate chain 2 (638 aa).

Composition is skewed to basic and acidic residues over residues methionine 1–arginine 13 and glutamine 20–alanine 43. 2 disordered regions span residues methionine 1–proline 135 and valine 154–threonine 209. N-acetylserine is present on serine 2. Residue serine 51 is modified to Diphosphoserine. Phosphoserine occurs at positions 51 and 90. Positions proline 88–serine 97 are enriched in low complexity. Threonine 95 bears the Phosphothreonine mark. Phosphoserine is present on residues serine 97, serine 101, and serine 104. Residues arginine 133 to threonine 165 form an interaction with DYNLT1 region. Positions glutamate 190–threonine 209 are enriched in basic and acidic residues. WD repeat units follow at residues serine 277–glutamate 326, histidine 330–valine 370, alanine 379–aspartate 420, serine 429–serine 469, glycine 474–serine 519, and glutamate 568–arginine 607.

Belongs to the dynein intermediate chain family. Homodimer. The cytoplasmic dynein 1 complex consists of two catalytic heavy chains (HCs) and a number of non-catalytic subunits presented by intermediate chains (ICs), light intermediate chains (LICs) and light chains (LCs); the composition seems to vary in respect to the IC, LIC and LC composition. The heavy chain homodimer serves as a scaffold for the probable homodimeric assembly of the respective non-catalytic subunits. The ICs and LICs bind directly to the HC dimer and the LCs assemble on the IC dimer. Interacts with DYNLT3. Interacts with DYNLT1. Interacts (dephosphorylated at Ser-90) with DCTN1. Interacts with BICD2. Interacts with SPEF2. Interacts with CFAP61. Post-translationally, the phosphorylation status of Ser-90 appears to be involved in dynactin-dependent target binding. In terms of processing, pyrophosphorylation by 5-diphosphoinositol pentakisphosphate (5-IP7) promotes interaction with DCTN1. Serine pyrophosphorylation is achieved by Mg(2+)-dependent, but enzyme independent transfer of a beta-phosphate from a inositol pyrophosphate to a pre-phosphorylated serine residue. In terms of tissue distribution, skeletal muscle, testis, kidney, brain, heart and spleen.

It localises to the cytoplasm. The protein localises to the cytoskeleton. Functionally, acts as one of several non-catalytic accessory components of the cytoplasmic dynein 1 complex that are thought to be involved in linking dynein to cargos and to adapter proteins that regulate dynein function. Cytoplasmic dynein 1 acts as a motor for the intracellular retrograde motility of vesicles and organelles along microtubules. The intermediate chains mediate the binding of dynein to dynactin via its 150 kDa component (p150-glued) DCTN1. Involved in membrane-transport, such as Golgi apparatus, late endosomes and lysosomes. The polypeptide is Cytoplasmic dynein 1 intermediate chain 2 (Dync1i2) (Rattus norvegicus (Rat)).